Here is a 402-residue protein sequence, read N- to C-terminus: Argininosuccinate synthase (402 aa).

Residues 9 to 17 (AYSGGLDTS) and Ala-36 contribute to the ATP site. L-citrulline is bound by residues Tyr-87 and Ser-92. Gly-117 provides a ligand contact to ATP. Residues Thr-119, Asn-123, and Asp-124 each coordinate L-aspartate. Residue Asn-123 coordinates L-citrulline. Residues Arg-127, Ser-176, Ser-185, Glu-261, and Tyr-273 each coordinate L-citrulline.

Belongs to the argininosuccinate synthase family. Type 1 subfamily. Homotetramer.

Its subcellular location is the cytoplasm. The catalysed reaction is L-citrulline + L-aspartate + ATP = 2-(N(omega)-L-arginino)succinate + AMP + diphosphate + H(+). The protein operates within amino-acid biosynthesis; L-arginine biosynthesis; L-arginine from L-ornithine and carbamoyl phosphate: step 2/3. This chain is Argininosuccinate synthase, found in Deinococcus radiodurans (strain ATCC 13939 / DSM 20539 / JCM 16871 / CCUG 27074 / LMG 4051 / NBRC 15346 / NCIMB 9279 / VKM B-1422 / R1).